Here is a 218-residue protein sequence, read N- to C-terminus: Acetyl- and succinyl-CoA transferase MT0822 (218 aa).

In terms of domain architecture, N-acetyltransferase spans 32-188; the sequence is DTILEGVHDP…EALLFRLTRD (157 aa). Residues Gln-94, 109-113, 119-124, 145-151, and Arg-160 each bind substrate; these read SGSWL, GHGYGT, and SRSFVDN.

In terms of assembly, dimer of dimers.

It carries out the reaction L-lysyl-[protein] + acetyl-CoA = N(6)-acetyl-L-lysyl-[protein] + CoA + H(+). It catalyses the reaction succinyl-CoA + L-lysyl-[protein] = N(6)-succinyl-L-lysyl-[protein] + CoA + H(+). In terms of biological role, acetylates and succinylates nucleoid-associated, DNA-binding protein HupB. The protein is Acetyl- and succinyl-CoA transferase MT0822 of Mycobacterium tuberculosis (strain CDC 1551 / Oshkosh).